The following is a 473-amino-acid chain: P3 protein (473 aa).

Helical transmembrane passes span 25–45 (FVGM…AQVM), 221–241 (PMLL…FLMA), 249–269 (ALAL…SYLF), 277–297 (VTLA…FLPL), 316–336 (ISKI…GVVI), 356–376 (FILL…ILVG), 381–401 (IVLV…SLAI), 413–433 (VSIE…QLSL), and 446–466 (FIVA…QFIY).

Belongs to the bile acid:sodium symporter (BASS) (TC 2.A.28) family.

Its subcellular location is the membrane. Its function is as follows. The ubiquitous expression and the conservation of the sequence in distant animal species suggest that the gene codes for a protein with housekeeping functions. The polypeptide is P3 protein (Slc10a3) (Mus musculus (Mouse)).